We begin with the raw amino-acid sequence, 497 residues long: Guanosine-5'-triphosphate,3'-diphosphate pyrophosphatase (497 aa).

This sequence belongs to the GppA/Ppx family. GppA subfamily.

It catalyses the reaction guanosine 3'-diphosphate 5'-triphosphate + H2O = guanosine 3',5'-bis(diphosphate) + phosphate + H(+). The protein operates within purine metabolism; ppGpp biosynthesis; ppGpp from GTP: step 2/2. Its function is as follows. Catalyzes the conversion of pppGpp to ppGpp. Guanosine pentaphosphate (pppGpp) is a cytoplasmic signaling molecule which together with ppGpp controls the 'stringent response', an adaptive process that allows bacteria to respond to amino acid starvation, resulting in the coordinated regulation of numerous cellular activities. The sequence is that of Guanosine-5'-triphosphate,3'-diphosphate pyrophosphatase from Pseudoalteromonas translucida (strain TAC 125).